The primary structure comprises 1214 residues: Brassinosteroid LRR receptor kinase BRL3 (1214 aa).

The first 29 residues, 1–29 (MAAVRVVAPAPSVLLLVAAAVVLLHLARA), serve as a signal peptide directing secretion. Asparagine 61 is a glycosylation site (N-linked (GlcNAc...) asparagine). The Cys pair 1 motif lies at 69-76 (CAWAGVSC). LRR repeat units lie at residues 103 to 127 (LSALRRLDLRGNAFHGDLSRHGSPR), 131 to 155 (PCALVEVDISSNTFNGTLPRAFLAS), 156 to 177 (CGGLQTLNLSRNSLTGGGYPFP), 178 to 202 (PSLRRLDMSRNQLSDAGLLNYSLTG), 204 to 228 (HGIQYLNLSANQFTGSLPGLAPCTE), 230 to 250 (SVLDLSWNLMSGVLPPRFVAM), 252 to 276 (PANLTYLSIAGNNFSMDISDYEFGG), 277 to 302 (CANLTLLDWSYNRLRSTGLPRSLVDC), 303 to 325 (RRLEALDMSGNKLLSGPIPTFLV), 327 to 351 (LQALRRLSLAGNRFTGEISDKLSIL), 353 to 375 (KTLVELDLSSNQLIGSLPASFGQ), 377 to 400 (RFLQVLDLGNNQLSGDFVETVITN), 401 to 427 (ISSLRVLRLPFNNITGANPLPALASRC), 429 to 451 (LLEVIDLGSNEFDGEIMPDLCSS), 452 to 476 (LPSLRKLLLPNNYINGTVPSSLSNC), 478 to 500 (NLESIDLSFNLLVGQIPPEILFL), 502 to 525 (KLVDLVLWANNLSGEIPDKFCFNS), 526 to 549 (TALETLVISYNSFTGNIPESITRC), 550 to 572 (VNLIWLSLAGNNLTGSIPSGFGN), 573 to 597 (LQNLAILQLNKNSLSGKVPAELGSC), 599 to 621 (NLIWLDLNSNELTGTIPPQLAAQ), and 650 to 673 (GVLFEFLDIRPDRLANFPAVHLCS). N-linked (GlcNAc...) asparagine glycans are attached at residues asparagine 145, asparagine 163, asparagine 197, and asparagine 210. Residues asparagine 254, asparagine 264, and asparagine 279 are each glycosylated (N-linked (GlcNAc...) asparagine). Asparagine 400 and asparagine 413 each carry an N-linked (GlcNAc...) asparagine glycan. N-linked (GlcNAc...) asparagine glycosylation is present at asparagine 466. N-linked (GlcNAc...) asparagine glycans are attached at residues asparagine 512 and asparagine 524. Asparagine 561 carries an N-linked (GlcNAc...) asparagine glycan. Tyrosine 678 contributes to the brassinolide binding site. LRR repeat units lie at residues 689–712 (NGSMIFLDLSYNSLTGTIPASFGN), 713–736 (MTYLEVLNLGHNELTGAIPDAFTG), 738–760 (KGIGALDLSHNHLTGVIPPGFGC), and 762–786 (HFLADFDVSNNNLTGEIPTSGQLIT). Positions 799–806 (CGIPLNPC) match the Cys pair 2 motif. A helical transmembrane segment spans residues 829–849 (SVFLAVTLSVLILFSLLIIHY). The 284-residue stretch at 913–1196 (FCAETLIGSG…FQVDSGSNFL (284 aa)) folds into the Protein kinase domain. ATP-binding positions include 919-927 (IGSGGFGEV), lysine 941, 987-989 (EYM), 993-996 (SLDF), 1039-1044 (DMKSSN), and aspartate 1057. The active-site Proton acceptor is aspartate 1039.

Belongs to the protein kinase superfamily. Ser/Thr protein kinase family. Highly expressed in roots. Expressed at low levels in shoots.

Its subcellular location is the cell membrane. The catalysed reaction is L-seryl-[protein] + ATP = O-phospho-L-seryl-[protein] + ADP + H(+). It catalyses the reaction L-threonyl-[protein] + ATP = O-phospho-L-threonyl-[protein] + ADP + H(+). Functionally, may be involved in brassenosteroid (BR) perception in roots. The chain is Brassinosteroid LRR receptor kinase BRL3 from Oryza sativa subsp. japonica (Rice).